Reading from the N-terminus, the 241-residue chain is MTILFISDLHLSPLRPDITDCFIDFMQNEAIHAEKLYVLGDLFEFWIGDDDNSPFNVLVKNEFKALTKKGVKCYFIQGNRDFLLNKRFCKETGVELLDDHTVIDLDGEKVLIMHGDTLCIDDIKYQEFRAKVHKPWLQWVFNRIPLFIRQRIVKNVQDKIKEKKQTKTLCIMDVTQSEVERVMQEEGVQRLIHGHTHRPDTHTFISNDKEMTRIVLGDWYSQGSILEYSDKIYSLHKKEFK.

Mn(2+) contacts are provided by Asp-8, His-10, Asp-41, Asn-79, and His-114. 79 to 80 contacts substrate; the sequence is NR. The substrate site is built by Asp-122, Lys-164, Lys-167, and His-195. The Mn(2+) site is built by His-195 and His-197.

The protein belongs to the LpxH family. The cofactor is Mn(2+).

Its subcellular location is the cell inner membrane. It catalyses the reaction UDP-2-N,3-O-bis[(3R)-3-hydroxytetradecanoyl]-alpha-D-glucosamine + H2O = 2-N,3-O-bis[(3R)-3-hydroxytetradecanoyl]-alpha-D-glucosaminyl 1-phosphate + UMP + 2 H(+). Its pathway is glycolipid biosynthesis; lipid IV(A) biosynthesis; lipid IV(A) from (3R)-3-hydroxytetradecanoyl-[acyl-carrier-protein] and UDP-N-acetyl-alpha-D-glucosamine: step 4/6. In terms of biological role, hydrolyzes the pyrophosphate bond of UDP-2,3-diacylglucosamine to yield 2,3-diacylglucosamine 1-phosphate (lipid X) and UMP by catalyzing the attack of water at the alpha-P atom. Involved in the biosynthesis of lipid A, a phosphorylated glycolipid that anchors the lipopolysaccharide to the outer membrane of the cell. The sequence is that of UDP-2,3-diacylglucosamine hydrolase from Aliivibrio fischeri (strain MJ11) (Vibrio fischeri).